A 342-amino-acid chain; its full sequence is Phosphate acyltransferase (342 aa).

It belongs to the PlsX family. Homodimer. Probably interacts with PlsY.

It is found in the cytoplasm. The catalysed reaction is a fatty acyl-[ACP] + phosphate = an acyl phosphate + holo-[ACP]. It participates in lipid metabolism; phospholipid metabolism. Functionally, catalyzes the reversible formation of acyl-phosphate (acyl-PO(4)) from acyl-[acyl-carrier-protein] (acyl-ACP). This enzyme utilizes acyl-ACP as fatty acyl donor, but not acyl-CoA. This Shewanella putrefaciens (strain CN-32 / ATCC BAA-453) protein is Phosphate acyltransferase.